The following is a 422-amino-acid chain: Multifunctional CCA protein (422 aa).

ATP-binding residues include Gly8 and Arg11. CTP contacts are provided by Gly8 and Arg11. Asp21 and Asp23 together coordinate Mg(2+). 3 residues coordinate ATP: Arg91, Arg137, and Arg140. CTP-binding residues include Arg91, Arg137, and Arg140. In terms of domain architecture, HD spans 228 to 329; the sequence is TGLHSLMALE…VKLLQSCDAW (102 aa). Residues 403–422 are disordered; the sequence is FKQDNAPEAQEKGGEDVGLT.

Belongs to the tRNA nucleotidyltransferase/poly(A) polymerase family. Bacterial CCA-adding enzyme type 1 subfamily. In terms of assembly, monomer. Can also form homodimers and oligomers. Mg(2+) serves as cofactor. The cofactor is Ni(2+).

The enzyme catalyses a tRNA precursor + 2 CTP + ATP = a tRNA with a 3' CCA end + 3 diphosphate. It carries out the reaction a tRNA with a 3' CCA end + 2 CTP + ATP = a tRNA with a 3' CCACCA end + 3 diphosphate. In terms of biological role, catalyzes the addition and repair of the essential 3'-terminal CCA sequence in tRNAs without using a nucleic acid template. Adds these three nucleotides in the order of C, C, and A to the tRNA nucleotide-73, using CTP and ATP as substrates and producing inorganic pyrophosphate. tRNA 3'-terminal CCA addition is required both for tRNA processing and repair. Also involved in tRNA surveillance by mediating tandem CCA addition to generate a CCACCA at the 3' terminus of unstable tRNAs. While stable tRNAs receive only 3'-terminal CCA, unstable tRNAs are marked with CCACCA and rapidly degraded. This Hahella chejuensis (strain KCTC 2396) protein is Multifunctional CCA protein.